The primary structure comprises 217 residues: Superoxide dismutase [Cu-Zn], chloroplastic (217 aa).

The transit peptide at 1–63 (MAAHSIFTTT…TTPKPLTVFA (63 aa)) directs the protein to the chloroplast. The Cu cation site is built by His-109, His-111, and His-126. A disulfide bridge links Cys-120 with Cys-209. His-126, His-134, His-143, and Asp-146 together coordinate Zn(2+). His-183 serves as a coordination point for Cu cation.

This sequence belongs to the Cu-Zn superoxide dismutase family. In terms of assembly, homotetramer. Requires Cu cation as cofactor. Zn(2+) serves as cofactor.

Its subcellular location is the plastid. The protein resides in the chloroplast. It catalyses the reaction 2 superoxide + 2 H(+) = H2O2 + O2. Its function is as follows. Destroys radicals which are normally produced within the cells and which are toxic to biological systems. The chain is Superoxide dismutase [Cu-Zn], chloroplastic (SODCP.2) from Solanum lycopersicum (Tomato).